The chain runs to 444 residues: Adenylosuccinate synthetase (444 aa).

GTP contacts are provided by residues 19–25 and 47–49; these read GDEGKGK and GHT. The Proton acceptor role is filled by Asp20. 2 residues coordinate Mg(2+): Asp20 and Gly47. Residues 20–23, 45–48, Thr139, Arg153, Gln234, Thr249, and Arg317 contribute to the IMP site; these read DEGK and NAGH. The active-site Proton donor is His48. 313-319 contacts substrate; it reads TVTGRPR. Residues Arg319, 345 to 347, and 427 to 429 each bind GTP; these read KLD and STG.

This sequence belongs to the adenylosuccinate synthetase family. In terms of assembly, homodimer. Requires Mg(2+) as cofactor.

Its subcellular location is the cytoplasm. The enzyme catalyses IMP + L-aspartate + GTP = N(6)-(1,2-dicarboxyethyl)-AMP + GDP + phosphate + 2 H(+). The protein operates within purine metabolism; AMP biosynthesis via de novo pathway; AMP from IMP: step 1/2. Plays an important role in the de novo pathway of purine nucleotide biosynthesis. Catalyzes the first committed step in the biosynthesis of AMP from IMP. This Methylibium petroleiphilum (strain ATCC BAA-1232 / LMG 22953 / PM1) protein is Adenylosuccinate synthetase.